The following is a 280-amino-acid chain: Biotin carboxyl carrier protein of acetyl-CoA carboxylase 1, chloroplastic (280 aa).

Residues 1 to 82 constitute a chloroplast transit peptide; the sequence is MASSSFSVTS…SNAAKVDGPS (82 aa). A compositionally biased stretch (polar residues) spans 52-75; it reads PSRSSYPVVKAQSNKVSTGASSNA. Disordered stretches follow at residues 52–106 and 164–215; these read PSRS…ATEE and QPSY…GTFY. Residues 177–188 show a composition bias toward low complexity; it reads PAAAAPAPSTPA. Residues 189–198 are compositionally biased toward pro residues; that stretch reads SLPPPSPPTP. Residues 203–279 enclose the Biotinyl-binding domain; that stretch reads LPTVKSPMAG…SLDTPLFVVQ (77 aa). N6-biotinyllysine is present on lysine 245.

Acetyl-CoA carboxylase is a heterohexamer composed of biotin carboxyl carrier protein, biotin carboxylase and 2 subunits each of ACCase subunit alpha and ACCase plastid-coded subunit beta (accD). In terms of tissue distribution, present in developing tissues from roots, leaves, flowers, siliques and seeds (at protein level).

Its subcellular location is the plastid. The protein resides in the chloroplast. The protein operates within lipid metabolism; fatty acid biosynthesis. Functionally, this protein is a component of the acetyl coenzyme A carboxylase complex; first, biotin carboxylase catalyzes the carboxylation of the carrier protein and then the transcarboxylase transfers the carboxyl group to form malonyl-CoA. This Arabidopsis thaliana (Mouse-ear cress) protein is Biotin carboxyl carrier protein of acetyl-CoA carboxylase 1, chloroplastic (BCCP1).